Consider the following 967-residue polypeptide: Translation initiation factor IF-2 (967 aa).

Disordered regions lie at residues 201 to 320 (KPIV…PGFV) and 349 to 382 (LQGKGNKSKAAKYRRDKRDTHRQKSDDEQRELEA). Residues 233-248 (TGPTFSGQTIDLSQFN) show a composition bias toward polar residues. Low complexity predominate over residues 256–272 (PNKGGAKPAGAGNNNNN). Basic residues predominate over residues 354-363 (NKSKAAKYRR). Basic and acidic residues predominate over residues 364-382 (DKRDTHRQKSDDEQRELEA). The tr-type G domain occupies 465–635 (HRAPIVTVMG…LLEAEVLDLK (171 aa)). Residues 474–481 (GHVDHGKT) are G1. 474–481 (GHVDHGKT) is a GTP binding site. Residues 499–503 (GITQH) form a G2 region. The G3 stretch occupies residues 521–524 (DTPG). GTP-binding positions include 521–525 (DTPGH) and 575–578 (NKVD). Residues 575–578 (NKVD) form a G4 region. The tract at residues 611–613 (SAK) is G5.

This sequence belongs to the TRAFAC class translation factor GTPase superfamily. Classic translation factor GTPase family. IF-2 subfamily.

It is found in the cytoplasm. Functionally, one of the essential components for the initiation of protein synthesis. Protects formylmethionyl-tRNA from spontaneous hydrolysis and promotes its binding to the 30S ribosomal subunits. Also involved in the hydrolysis of GTP during the formation of the 70S ribosomal complex. The sequence is that of Translation initiation factor IF-2 from Flavobacterium psychrophilum (strain ATCC 49511 / DSM 21280 / CIP 103535 / JIP02/86).